Reading from the N-terminus, the 306-residue chain is Acetyl-coenzyme A carboxylase carboxyl transferase subunit beta (306 aa).

Positions 28-297 constitute a CoA carboxyltransferase N-terminal domain; that stretch reads LWIKCPDTGQ…TPAGKPSTPV (270 aa). The disordered stretch occupies residues 287–306; the sequence is QTPAGKPSTPVAPEPVPDAA. Residues 296 to 306 are compositionally biased toward pro residues; it reads PVAPEPVPDAA.

The protein belongs to the AccD/PCCB family. In terms of assembly, acetyl-CoA carboxylase is a heterohexamer composed of biotin carboxyl carrier protein (AccB), biotin carboxylase (AccC) and two subunits each of ACCase subunit alpha (AccA) and ACCase subunit beta (AccD).

The protein localises to the cytoplasm. It catalyses the reaction N(6)-carboxybiotinyl-L-lysyl-[protein] + acetyl-CoA = N(6)-biotinyl-L-lysyl-[protein] + malonyl-CoA. It participates in lipid metabolism; malonyl-CoA biosynthesis; malonyl-CoA from acetyl-CoA: step 1/1. Functionally, component of the acetyl coenzyme A carboxylase (ACC) complex. Biotin carboxylase (BC) catalyzes the carboxylation of biotin on its carrier protein (BCCP) and then the CO(2) group is transferred by the transcarboxylase to acetyl-CoA to form malonyl-CoA. The sequence is that of Acetyl-coenzyme A carboxylase carboxyl transferase subunit beta from Methylorubrum populi (strain ATCC BAA-705 / NCIMB 13946 / BJ001) (Methylobacterium populi).